Consider the following 444-residue polypeptide: MPQSFKELGVAKWLSESLEAMKIHSPTSIQSACIPEILKGRDCIGGAKTGSGKTIAFAALMLTQWSQDPFGIFGLILTPTRELALQIAEQFAALGALMNIKVCVVVGGEDFVKQTLELQKKPHFVIATPGRLADHILNSGEETVSGLRRIKYLVLDEADRLLSNSFGSDLQRCFTILPPSEKRQTLLFTATVTDAVKALKDKPRAEGKLPVFLHQVDAGVDQIAIPKTLSTMYVFVPSYVKEAYLTSILKLPKYEESTAVVFVNRTMTAEVLRRMLRKLEFKVASLHSEMPQTERTNSLHRFKAGAARILIATDVASRGLDIPTVELVVNFDIPADPDDFIHRVGRTARAGRKGDAISIIGEKDIERIESIEERINKKMELLEGVDDDKVINDSLQKATTAKREAMLDMDKESFGERRKVNKKKRAVEEPSGKRQQKKVKKVKS.

The Q motif motif lies at 3 to 31; the sequence is QSFKELGVAKWLSESLEAMKIHSPTSIQS. In terms of domain architecture, Helicase ATP-binding spans 34 to 210; it reads IPEILKGRDC…DKPRAEGKLP (177 aa). 47–54 provides a ligand contact to ATP; the sequence is AKTGSGKT. The DEAD box motif lies at 156 to 159; sequence DEAD. One can recognise a Helicase C-terminal domain in the interval 244 to 390; that stretch reads YLTSILKLPK…LLEGVDDDKV (147 aa). Residues 402–418 show a composition bias toward basic and acidic residues; the sequence is KREAMLDMDKESFGERR. Residues 402 to 444 are disordered; that stretch reads KREAMLDMDKESFGERRKVNKKKRAVEEPSGKRQQKKVKKVKS. The segment covering 434-444 has biased composition (basic residues); it reads RQQKKVKKVKS.

The protein belongs to the DEAD box helicase family. DDX49/DBP8 subfamily.

Its subcellular location is the nucleus. It localises to the nucleolus. It catalyses the reaction ATP + H2O = ADP + phosphate + H(+). Its function is as follows. ATP-binding RNA helicase involved in 40S ribosomal subunit biogenesis and is required for the normal formation of 18S rRNAs through pre-rRNA processing at A0, A1 and A2 sites. Required for vegetative growth. The sequence is that of ATP-dependent RNA helicase DBP8 (DBP8) from Lodderomyces elongisporus (strain ATCC 11503 / CBS 2605 / JCM 1781 / NBRC 1676 / NRRL YB-4239) (Yeast).